The sequence spans 145 residues: Class I hydrophobin 1 (145 aa).

The signal sequence occupies residues 1–19; the sequence is MKFSYAIAAVVAAAASVQA. Cystine bridges form between Cys-65–Cys-126, Cys-72–Cys-120, Cys-73–Cys-106, and Cys-127–Cys-140. N-linked (GlcNAc...) asparagine glycans are attached at residues Asn-80 and Asn-129.

It belongs to the fungal hydrophobin family. Self-assembles to form functional amyloid fibrils called rodlets. Self-assembly into fibrillar rodlets occurs spontaneously at hydrophobic:hydrophilic interfaces and the rodlets further associate laterally to form amphipathic monolayers.

The protein resides in the secreted. It localises to the cell wall. In terms of biological role, aerial growth, conidiation, and dispersal of filamentous fungi in the environment rely upon a capability of their secreting small amphipathic proteins called hydrophobins (HPBs) with low sequence identity. Class I can self-assemble into an outermost layer of rodlet bundles on aerial cell surfaces, conferring cellular hydrophobicity that supports fungal growth, development and dispersal; whereas Class II form highly ordered films at water-air interfaces through intermolecular interactions but contribute nothing to the rodlet structure. Hyd1 is a class I hydrophobin that is crucial for the initiation of primordia formation. Plays also important roles in nitrogen regulation and resistance to abiotic stresses. The sequence is that of Class I hydrophobin 1 from Ganoderma lucidum (Ling zhi medicinal fungus).